The sequence spans 61 residues: Small ribosomal subunit protein uS14 (61 aa).

Residues Cys24, Cys27, Cys40, and Cys43 each coordinate Zn(2+).

It belongs to the universal ribosomal protein uS14 family. Zinc-binding uS14 subfamily. In terms of assembly, part of the 30S ribosomal subunit. Contacts proteins S3 and S10. Zn(2+) is required as a cofactor.

Functionally, binds 16S rRNA, required for the assembly of 30S particles and may also be responsible for determining the conformation of the 16S rRNA at the A site. This Kosmotoga olearia (strain ATCC BAA-1733 / DSM 21960 / TBF 19.5.1) protein is Small ribosomal subunit protein uS14.